Here is a 179-residue protein sequence, read N- to C-terminus: Probable mitochondrial import inner membrane translocase subunit Tim17 1 (179 aa).

3 helical membrane passes run 17 to 37, 61 to 81, and 113 to 133; these read CGGA…IKGF, LVGG…CSLV, and LSSA…GIVV.

The protein belongs to the Tim17/Tim22/Tim23 family. As to quaternary structure, component of the TIM23 complex at least composed of Tim23, Tim17 (Tim17a1, Tim17a2 or Tim17b1) and a Tim50. The complex interacts with the Tim44 component of the PAM complex.

It localises to the mitochondrion inner membrane. Functionally, essential component of the TIM23 complex, a complex that mediates the translocation of transit peptide-containing proteins across the mitochondrial inner membrane. In Drosophila melanogaster (Fruit fly), this protein is Probable mitochondrial import inner membrane translocase subunit Tim17 1 (Tim17b1).